Consider the following 480-residue polypeptide: Adenosylhomocysteinase (480 aa).

The substrate site is built by Thr-63, Asp-142, and Glu-203. Thr-204–Thr-206 is a binding site for NAD(+). Substrate contacts are provided by Lys-233 and Asp-237. NAD(+) is bound by residues Asn-238, Gly-267–Gly-272, Glu-290, Asn-325, Ile-346–His-348, and Asn-394.

It belongs to the adenosylhomocysteinase family. NAD(+) serves as cofactor.

The protein resides in the cytoplasm. The catalysed reaction is S-adenosyl-L-homocysteine + H2O = L-homocysteine + adenosine. The protein operates within amino-acid biosynthesis; L-homocysteine biosynthesis; L-homocysteine from S-adenosyl-L-homocysteine: step 1/1. Functionally, may play a key role in the regulation of the intracellular concentration of adenosylhomocysteine. The sequence is that of Adenosylhomocysteinase from Xanthomonas axonopodis pv. citri (strain 306).